The following is a 505-amino-acid chain: RNA-splicing ligase RtcB homolog (505 aa).

Mn(2+)-binding residues include aspartate 119, cysteine 122, histidine 227, and histidine 259. Residue 226–230 (NHYAE) coordinates GMP. Residue serine 300 is modified to Phosphoserine. Histidine 353 serves as a coordination point for Mn(2+). GMP is bound by residues 353-354 (HN), 402-405 (GGTM), serine 409, and 428-431 (HGAG). The active-site GMP-histidine intermediate is histidine 428. Lysine 496 participates in a covalent cross-link: Glycyl lysine isopeptide (Lys-Gly) (interchain with G-Cter in SUMO2). Lysine 504 is a GMP binding site.

Belongs to the RtcB family. As to quaternary structure, catalytic component of the tRNA-splicing ligase complex. The cofactor is Mn(2+).

The protein resides in the nucleus. The protein localises to the cytoplasm. It catalyses the reaction a 3'-end 3'-phospho-ribonucleotide-RNA + a 5'-end dephospho-ribonucleoside-RNA + GTP = a ribonucleotidyl-ribonucleotide-RNA + GMP + diphosphate. The catalysed reaction is a 3'-end 2',3'-cyclophospho-ribonucleotide-RNA + a 5'-end dephospho-ribonucleoside-RNA + GTP + H2O = a ribonucleotidyl-ribonucleotide-RNA + GMP + diphosphate + H(+). Its function is as follows. Catalytic subunit of the tRNA-splicing ligase complex that acts by directly joining spliced tRNA halves to mature-sized tRNAs by incorporating the precursor-derived splice junction phosphate into the mature tRNA as a canonical 3',5'-phosphodiester. May act as an RNA ligase with broad substrate specificity, and may function toward other RNAs. The sequence is that of RNA-splicing ligase RtcB homolog from Rattus norvegicus (Rat).